The chain runs to 233 residues: MFGKFVLLAVLLVGVNSRYVIIEDPVYYIEDHELPEQWTSSRVRRDAHGAVTLNTDGTSGAVVKVPIAGSDKNIVSAIGSVDLTDRLKVGAATAGLAIDNVNGHGASITDTHIPGFGDKLTAAGKINLIHNDNHDLTANAFATRNMPSIPLVPDFNTVGGGIDYMFKDKIGASASVAHTDLINRNDYSLGGKLNLFKTPDTSVDFNAGWKKFDTPVINSNWEPNFGFSLSKYF.

The signal sequence occupies residues 1 to 17 (MFGKFVLLAVLLVGVNS). A propeptide spanning residues 18 to 45 (RYVIIEDPVYYIEDHELPEQWTSSRVRR) is cleaved from the precursor.

The protein belongs to the attacin/sarcotoxin-2 family.

It is found in the secreted. Has antibacterial activity against both Gram-positive and Gram-negative bacteria. The chain is Defense protein 3 from Lonomia obliqua (Moth).